We begin with the raw amino-acid sequence, 238 residues long: MESIEEFEKRLGYRFQNKNLLIEALTHKSYKKPYNNERLEFLGDAVLDLVIGEFLFLKFPKADEGELSKMRASLVNEKGFAKLAERVSLGRHIFISNAEENNKGREKPSLLSNAFEATMGAIYLETGLSVVREVVHRLLDEVYPKIDLGSLFRDYKTALQELTQAKFGETPEYVILGSSGPDHKKEFEVAVCVLGSEYARACGSSKKEAQQEAARIALEIFHRKEKEAKESALKGKSE.

The region spanning Ile4–Gly127 is the RNase III domain. Glu40 lines the Mg(2+) pocket. Residue Asp44 is part of the active site. Residues Asn113 and Glu116 each coordinate Mg(2+). Glu116 is a catalytic residue. The 70-residue stretch at Asp154–Arg223 folds into the DRBM domain.

This sequence belongs to the ribonuclease III family. As to quaternary structure, homodimer. Requires Mg(2+) as cofactor.

The protein localises to the cytoplasm. The catalysed reaction is Endonucleolytic cleavage to 5'-phosphomonoester.. Functionally, digests double-stranded RNA. Involved in the processing of primary rRNA transcript to yield the immediate precursors to the large and small rRNAs (23S and 16S). Processes some mRNAs, and tRNAs when they are encoded in the rRNA operon. Processes pre-crRNA and tracrRNA of type II CRISPR loci if present in the organism. The chain is Ribonuclease 3 from Wolinella succinogenes (strain ATCC 29543 / DSM 1740 / CCUG 13145 / JCM 31913 / LMG 7466 / NCTC 11488 / FDC 602W) (Vibrio succinogenes).